A 279-amino-acid chain; its full sequence is Acetylglutamate kinase (279 aa).

Residues 62-63, arginine 84, and asparagine 177 contribute to the substrate site; that span reads GG.

Belongs to the acetylglutamate kinase family. ArgB subfamily.

Its subcellular location is the cytoplasm. The catalysed reaction is N-acetyl-L-glutamate + ATP = N-acetyl-L-glutamyl 5-phosphate + ADP. It functions in the pathway amino-acid biosynthesis; L-arginine biosynthesis; N(2)-acetyl-L-ornithine from L-glutamate: step 2/4. Its function is as follows. Catalyzes the ATP-dependent phosphorylation of N-acetyl-L-glutamate. The polypeptide is Acetylglutamate kinase (Pseudothermotoga lettingae (strain ATCC BAA-301 / DSM 14385 / NBRC 107922 / TMO) (Thermotoga lettingae)).